A 523-amino-acid chain; its full sequence is NAD(P)H-quinone oxidoreductase subunit 2 (523 aa).

14 helical membrane passes run 29–49 (AIAP…VDLA), 57–77 (WVPP…AQQW), 94–114 (LAIS…LISW), 123–143 (PIGE…LLCG), 147–167 (LVSV…LAGY), 182–202 (LLVG…LYGL), 223–243 (AALS…AVPF), 255–275 (PTPV…ALAL), 291–311 (LLFT…ALAQ), 317–337 (MLAY…VCGT), 345–365 (VLYM…IILF), 389–409 (LGLS…GFFG), 424–444 (LLVV…ISVI), and 477–497 (IALV…NPLF).

This sequence belongs to the complex I subunit 2 family. In terms of assembly, NDH-1 can be composed of about 15 different subunits; different subcomplexes with different compositions have been identified which probably have different functions.

The protein localises to the cellular thylakoid membrane. It catalyses the reaction a plastoquinone + NADH + (n+1) H(+)(in) = a plastoquinol + NAD(+) + n H(+)(out). The enzyme catalyses a plastoquinone + NADPH + (n+1) H(+)(in) = a plastoquinol + NADP(+) + n H(+)(out). Its function is as follows. NDH-1 shuttles electrons from an unknown electron donor, via FMN and iron-sulfur (Fe-S) centers, to quinones in the respiratory and/or the photosynthetic chain. The immediate electron acceptor for the enzyme in this species is believed to be plastoquinone. Couples the redox reaction to proton translocation, and thus conserves the redox energy in a proton gradient. Cyanobacterial NDH-1 also plays a role in inorganic carbon-concentration. This chain is NAD(P)H-quinone oxidoreductase subunit 2, found in Prochlorococcus marinus (strain MIT 9313).